The following is an 899-amino-acid chain: MLKAVLERTIGSKSKRDLKDYLPTLRNINKLERWALLLSDEDFSKETEKLKDELKSGNSLESILERAFTLSREAARRRLKERPYDVQIIAGLALHKGKIIEMKTGEGKTLSSVQAAYLNSLTGDGVIIVTVNDYLAERDSNWMKPVFDLLGVSVGVVLSNMDYELRKAQYAKDITYVTNNELGFDYLRDNMRYDLNEKSLRKFNYCIIDEIDSILIDEARTPLIISGPTEGNTNAYLEVNSLVSFLKECSKDSKTGDYPLEIDDLDGDYTVDEKAKRISFTAKGLNNLEQLLVSKGIISGSMYTDSNFNYVHYMTQALKAHLLFLKNREYIVGDSGVEIVDEFTGRVLTGRRYSDGLHQAIEAKEGVRVANENKTMATITFQNLFRMFNKISGMTGTADTEAKEFHRIYNLDVVVVPTNRLLARIDEDDTIYYTEEFKFNAITDEVYKTYKKGQPVLVGTVSIEKSEILSAMFKSRGIKHEVLNAKNHSREAFIIAEAGAKHAVTIATNMAGRGTDIKLGGNIEHRVRKKIGTNVSLEEFQEAVKNEREDYLKDYNEVKSLGGLYVIGSERHESRRIDNQLRGRSGRQGDPGRSRFYVSLEDDLMRLFAGDNLRSLMGKLGMATGEPITHSLLTKSLINAQKRVEDRNFEIRKHLLEYDDVITKQRDFIYAQRNSILEDTAIKDRILIALEEYLTFLLEGAKSSTVSNVFLNEVNLIFAYMLEGLGSIENINSLDLKAKLMQIAKANLDEKENSIGRDLFNGFLRYEYLRNIDSKFQEHLANLDSLREAVYLRSYANKNPITEYKEEGFLIFSELIKDIKVSTIRRVLQLKLDSNSSNFKSVKKSKNVNSIHKELSGIVINENKSVSNVQVVRSSPKIGRNEPCYCGSGKKYKNCHGKS.

ATP-binding positions include Gln-87, 105–109, and Asp-516; that span reads GEGKT. Zn(2+)-binding residues include Cys-884, Cys-886, Cys-895, and His-896.

Belongs to the SecA family. As to quaternary structure, monomer and homodimer. Part of the essential Sec protein translocation apparatus which comprises SecA, SecYEG and auxiliary proteins SecDF. Other proteins may also be involved. The cofactor is Zn(2+).

The protein localises to the cell inner membrane. Its subcellular location is the cytoplasm. It catalyses the reaction ATP + H2O + cellular proteinSide 1 = ADP + phosphate + cellular proteinSide 2.. In terms of biological role, part of the Sec protein translocase complex. Interacts with the SecYEG preprotein conducting channel. Has a central role in coupling the hydrolysis of ATP to the transfer of proteins into and across the cell membrane, serving as an ATP-driven molecular motor driving the stepwise translocation of polypeptide chains across the membrane. The chain is Protein translocase subunit SecA from Borreliella afzelii (strain PKo) (Borrelia afzelii).